The primary structure comprises 390 residues: S-adenosylmethionine synthase (390 aa).

An ATP-binding site is contributed by His17. Asp19 contributes to the Mg(2+) binding site. Glu45 lines the K(+) pocket. Glu58 and Gln101 together coordinate L-methionine. Positions 101 to 111 are flexible loop; the sequence is QSPDIGQGVDT. Residues 160 to 162, 226 to 227, Asp235, 241 to 242, Ala258, and Lys262 contribute to the ATP site; these read DGK, RF, and RK. An L-methionine-binding site is contributed by Asp235. Lys266 provides a ligand contact to L-methionine.

This sequence belongs to the AdoMet synthase family. Homotetramer; dimer of dimers. Mg(2+) is required as a cofactor. The cofactor is K(+).

It localises to the cytoplasm. It carries out the reaction L-methionine + ATP + H2O = S-adenosyl-L-methionine + phosphate + diphosphate. Its pathway is amino-acid biosynthesis; S-adenosyl-L-methionine biosynthesis; S-adenosyl-L-methionine from L-methionine: step 1/1. Catalyzes the formation of S-adenosylmethionine (AdoMet) from methionine and ATP. The overall synthetic reaction is composed of two sequential steps, AdoMet formation and the subsequent tripolyphosphate hydrolysis which occurs prior to release of AdoMet from the enzyme. This Anaeromyxobacter dehalogenans (strain 2CP-1 / ATCC BAA-258) protein is S-adenosylmethionine synthase.